Consider the following 636-residue polypeptide: 1-deoxy-D-xylulose-5-phosphate synthase (636 aa).

Thiamine diphosphate-binding positions include H72 and 113 to 115; that span reads GHA. D144 contributes to the Mg(2+) binding site. Residues 145 to 146, N174, Y287, and E370 contribute to the thiamine diphosphate site; that span reads GS. Residue N174 coordinates Mg(2+).

The protein belongs to the transketolase family. DXPS subfamily. In terms of assembly, homodimer. Mg(2+) serves as cofactor. It depends on thiamine diphosphate as a cofactor.

The enzyme catalyses D-glyceraldehyde 3-phosphate + pyruvate + H(+) = 1-deoxy-D-xylulose 5-phosphate + CO2. Its pathway is metabolic intermediate biosynthesis; 1-deoxy-D-xylulose 5-phosphate biosynthesis; 1-deoxy-D-xylulose 5-phosphate from D-glyceraldehyde 3-phosphate and pyruvate: step 1/1. In terms of biological role, catalyzes the acyloin condensation reaction between C atoms 2 and 3 of pyruvate and glyceraldehyde 3-phosphate to yield 1-deoxy-D-xylulose-5-phosphate (DXP). The chain is 1-deoxy-D-xylulose-5-phosphate synthase from Synechococcus sp. (strain ATCC 27144 / PCC 6301 / SAUG 1402/1) (Anacystis nidulans).